A 430-amino-acid chain; its full sequence is MARLAPHTLLLALFVFLFGSCTAQNCTTNNLQVTYPAPVAADGWEYRLISTGLTAPRSIVFDSTGGLLVLDAGVGVRRLTLQDNGGTCLSVTANATLIADTALNHGLAISADGGTIYASTVNDVYAYTYNEQTNTVDPTTRRTVVTNMTNTDHVTRTLLLSSRLPNELLVSRGSAANEDPQARNVTSGHSQIRAYDISTLAATDPPFDFVAGTLIGWGLRDSVGVGENPTNGGIWSVENSVDDLTREGVDVHQDNPGEELNFHGILGNTANQGGNYGYPDCYALWSTAGFPDLGALEVGDQFASDNATAGVTDATCNTNFVDPRLVFQAHVSPLDIKFNTNGTTAYITFHGSSDIVSVAFGLNGQPTSPMDSTTAANNILTSPDLTQCPDDCFTPVGLTFDTIGRLFFSSDSTGEIFVLQQSADDGNGDG.

A signal peptide spans 1–23 (MARLAPHTLLLALFVFLFGSCTA). Asn25 carries an N-linked (GlcNAc...) asparagine glycan. Arg57 lines the pyrroloquinoline quinone pocket. Residues Asn94 and Asn147 are each glycosylated (N-linked (GlcNAc...) asparagine). A pyrroloquinoline quinone-binding site is contributed by His153. A glycan (N-linked (GlcNAc...) asparagine) is linked at Asn184. Residue Arg220 participates in pyrroloquinoline quinone binding. Ser240 and Asp242 together coordinate Ca(2+). Cys281 and Cys316 form a disulfide bridge. Residue Asn306 is glycosylated (N-linked (GlcNAc...) asparagine). His330 contacts pyrroloquinoline quinone. Asn341 is a glycosylation site (N-linked (GlcNAc...) asparagine). His350 is a binding site for pyrroloquinoline quinone. The cysteines at positions 388 and 392 are disulfide-linked.

Belongs to the sugar dehydrogenase AA12 family. The cofactor is Ca(2+). It depends on pyrroloquinoline quinone as a cofactor.

It localises to the secreted. Functionally, pyrroloquinoline quinone (PPQ)-dependent oxidoreductase that catalyzes the oxidation of various sugars such as L-fucose. In Hypocrea jecorina (strain QM6a) (Trichoderma reesei), this protein is Pyrroloquinoline quinone-dependent sugar dehydrogenase.